The primary structure comprises 529 residues: Polygalacturonase (529 aa).

A signal peptide spans 1–21; it reads MNHRYTLLALAAAALSAGAHA. Asp-305 (proton donor) is an active-site residue. His-331 is an active-site residue. The segment at 516 to 529 is required for PGA export across the outer membrane and catalytic activity; sequence AFVPLKSVAPTSPI.

It belongs to the glycosyl hydrolase 28 family. As to quaternary structure, monomer.

It is found in the secreted. The catalysed reaction is (1,4-alpha-D-galacturonosyl)n+m + H2O = (1,4-alpha-D-galacturonosyl)n + (1,4-alpha-D-galacturonosyl)m.. In terms of biological role, contributes to the wilt disease production on tomato. This is Polygalacturonase (pglA) from Ralstonia solanacearum (Pseudomonas solanacearum).